A 528-amino-acid polypeptide reads, in one-letter code: D-3-phosphoglycerate dehydrogenase (528 aa).

NAD(+) is bound by residues 151-152 (RI), Asp-171, 230-232 (AAR), and Asp-256. The active site involves Arg-232. Glu-261 is a catalytic residue. The Proton donor role is filled by His-279. Position 279–282 (279–282 (HLGA)) interacts with NAD(+). The ACT domain occupies 455–527 (NLIIHYVDRP…DAYKLEVVDL (73 aa)).

The protein belongs to the D-isomer specific 2-hydroxyacid dehydrogenase family.

The enzyme catalyses (2R)-3-phosphoglycerate + NAD(+) = 3-phosphooxypyruvate + NADH + H(+). It catalyses the reaction (R)-2-hydroxyglutarate + NAD(+) = 2-oxoglutarate + NADH + H(+). It participates in amino-acid biosynthesis; L-serine biosynthesis; L-serine from 3-phospho-D-glycerate: step 1/3. In terms of biological role, catalyzes the reversible oxidation of 3-phospho-D-glycerate to 3-phosphonooxypyruvate, the first step of the phosphorylated L-serine biosynthesis pathway. Also catalyzes the reversible oxidation of 2-hydroxyglutarate to 2-oxoglutarate. In Mycobacterium bovis (strain ATCC BAA-935 / AF2122/97), this protein is D-3-phosphoglycerate dehydrogenase (serA).